Reading from the N-terminus, the 498-residue chain is Lysine--tRNA ligase (498 aa).

Residues E401 and E408 each coordinate Mg(2+).

The protein belongs to the class-II aminoacyl-tRNA synthetase family. Homodimer. It depends on Mg(2+) as a cofactor.

The protein localises to the cytoplasm. It catalyses the reaction tRNA(Lys) + L-lysine + ATP = L-lysyl-tRNA(Lys) + AMP + diphosphate. The protein is Lysine--tRNA ligase of Dehalococcoides mccartyi (strain ATCC BAA-2100 / JCM 16839 / KCTC 5957 / BAV1).